The sequence spans 632 residues: Putative ferric transport system permease protein FbpB 1 (632 aa).

The next 15 membrane-spanning stretches (helical) occupy residues 5–25 (SFNL…LPLL), 37–57 (LFLT…YKIS), 58–78 (MGYS…LSLA), 93–113 (LLCI…AIFV), 144–164 (LFLS…FALY), 178–198 (IFSI…VTLM), 223–243 (GFNG…FMIL), 270–290 (YQII…IVFI), 299–319 (PLVL…YIAG), 330–350 (LGSM…IWIG), 377–397 (IIGM…SIFY), 436–456 (IYAG…AYIV), 469–489 (FLTM…YILA), 490–510 (FNNA…SMVM), and 547–567 (CFIV…TSFV). An ABC transmembrane type-1 1 domain is found at 140-345 (ITNSLFLSGF…IFSLAIFIIQ (206 aa)). An ABC transmembrane type-1 2 domain is found at 431–632 (LINTLIYAGI…DCRRYAYFPF (202 aa)).

Belongs to the binding-protein-dependent transport system permease family. FbpB subfamily. In terms of assembly, the complex is composed of two ATP-binding proteins (FbpC), two transmembrane proteins (FbpB) and a solute-binding protein (FbpA).

It is found in the cell inner membrane. Functionally, part of the ABC transporter complex FbpABC (TC 3.A.1.10.1) involved in Fe(3+) ions import. Probably responsible for the translocation of the substrate across the membrane. This chain is Putative ferric transport system permease protein FbpB 1 (fbpB1), found in Haemophilus influenzae (strain ATCC 51907 / DSM 11121 / KW20 / Rd).